The primary structure comprises 148 residues: UPF0178 protein lpg0089 (148 aa).

This sequence belongs to the UPF0178 family.

This Legionella pneumophila subsp. pneumophila (strain Philadelphia 1 / ATCC 33152 / DSM 7513) protein is UPF0178 protein lpg0089.